The chain runs to 376 residues: Chaperone protein DnaJ (376 aa).

The region spanning 5-70 (DYYEILGVSK…QKRAAYDQYG (66 aa)) is the J domain. A CR-type zinc finger spans residues 131-209 (GVTKEIRIPT…CHGHGRVERS (79 aa)). Residues Cys-144, Cys-147, Cys-161, Cys-164, Cys-183, Cys-186, Cys-197, and Cys-200 each coordinate Zn(2+). CXXCXGXG motif repeat units lie at residues 144–151 (CDVCHGSG), 161–168 (CPTCHGSG), 183–190 (CPHCQGRG), and 197–204 (CNKCHGHG).

It belongs to the DnaJ family. Homodimer. Zn(2+) is required as a cofactor.

The protein localises to the cytoplasm. Functionally, participates actively in the response to hyperosmotic and heat shock by preventing the aggregation of stress-denatured proteins and by disaggregating proteins, also in an autonomous, DnaK-independent fashion. Unfolded proteins bind initially to DnaJ; upon interaction with the DnaJ-bound protein, DnaK hydrolyzes its bound ATP, resulting in the formation of a stable complex. GrpE releases ADP from DnaK; ATP binding to DnaK triggers the release of the substrate protein, thus completing the reaction cycle. Several rounds of ATP-dependent interactions between DnaJ, DnaK and GrpE are required for fully efficient folding. Also involved, together with DnaK and GrpE, in the DNA replication of plasmids through activation of initiation proteins. The protein is Chaperone protein DnaJ of Shigella flexneri.